The chain runs to 123 residues: uncharacterized protein (123 aa).

The disordered stretch occupies residues 76 to 97 (ENNKRKKKSEGERVRSPRTFRG).

This is an uncharacterized protein from Saccharomyces cerevisiae (strain ATCC 204508 / S288c) (Baker's yeast).